Consider the following 298-residue polypeptide: WRKY transcription factor 22 (298 aa).

2 disordered regions span residues 75-116 (EEPR…IQHK) and 181-220 (AEHN…TYSS). Residues 88 to 103 (SLSASSGSVTSKPSGS) show a composition bias toward low complexity. Basic residues predominate over residues 107-116 (RSKRRKIQHK). Positions 122 to 188 (AAEALNSDVW…YTAEHNHPAP (67 aa)) form a DNA-binding region, WRKY. The segment covering 190-220 (HRNSLAGSTRQKPSDQQTSKSPTTTIATYSS) has biased composition (polar residues).

The protein belongs to the WRKY group II-e family.

The protein localises to the nucleus. In terms of biological role, transcription factor involved in the expression of defense genes in innate immune response of plants. Interacts specifically with the W box (5'-(T)TGAC[CT]-3'), a frequently occurring elicitor-responsive cis-acting element. Activates WRKY 29, SIRK and its own promoters. The chain is WRKY transcription factor 22 (WRKY22) from Arabidopsis thaliana (Mouse-ear cress).